A 495-amino-acid chain; its full sequence is Probable cytosol aminopeptidase (495 aa).

Residues Lys267 and Asp272 each coordinate Mn(2+). The active site involves Lys279. Mn(2+) contacts are provided by Asp290, Asp349, and Glu351. Residue Arg353 is part of the active site.

It belongs to the peptidase M17 family. Mn(2+) serves as cofactor.

It is found in the cytoplasm. The catalysed reaction is Release of an N-terminal amino acid, Xaa-|-Yaa-, in which Xaa is preferably Leu, but may be other amino acids including Pro although not Arg or Lys, and Yaa may be Pro. Amino acid amides and methyl esters are also readily hydrolyzed, but rates on arylamides are exceedingly low.. It carries out the reaction Release of an N-terminal amino acid, preferentially leucine, but not glutamic or aspartic acids.. Presumably involved in the processing and regular turnover of intracellular proteins. Catalyzes the removal of unsubstituted N-terminal amino acids from various peptides. The chain is Probable cytosol aminopeptidase from Histophilus somni (strain 129Pt) (Haemophilus somnus).